Consider the following 329-residue polypeptide: tRNA (cytidine(32)/guanosine(34)-2'-O)-methyltransferase (329 aa).

S-adenosyl-L-methionine is bound by residues G53, W55, D75, D91, and D116. K156 serves as the catalytic Proton acceptor. A required for binding to WDR6 region spans residues 221–240; it reads DFNQLDGPTRIIVPFVTCGD. S271 bears the Phosphoserine mark.

This sequence belongs to the class I-like SAM-binding methyltransferase superfamily. RNA methyltransferase RlmE family. TRM7 subfamily. Interacts with WDR6; the interaction is direct, and required for 2'-O-methylation of position 34 in substrate tRNAs. As to expression, found in fetal brain, lung, liver and kidney. Widely expressed in adult tissue; with high expression in heart and liver, lower expression in skeletal muscle, kidney, and pancreas and also lowly expressed in brain and lung. In the adult brain, expressed in amygdala, caudate nucleus, corpus callosum, hippocampus and thalamus.

The protein localises to the cytoplasm. Its subcellular location is the nucleus. It carries out the reaction cytidine(32)/guanosine(34) in tRNA + 2 S-adenosyl-L-methionine = 2'-O-methylcytidine(32)/2'-O-methylguanosine(34) in tRNA + 2 S-adenosyl-L-homocysteine + 2 H(+). Its activity is regulated as follows. Inhibited by 2,6-diaminopurine (DAP); inhibition promotes UGA stop-codon readthrough during translation by misincorporation of tRNA(Trp) in the nascent polypeptide. Its function is as follows. Methylates the 2'-O-ribose of nucleotides at positions 32 and 34 of the tRNA anticodon loop of substrate tRNAs. Requisite for faithful cytoplasmic translation. Requires THADA for methylation of the nucleotide at position 32 of the anticodon loop of substrate tRNAs. Requires WDR6 for methylation of the nucleotide at position 34 of the anticodon loop of substrate tRNAs. Promotes translation efficiency of the UUU codon. Plays a role in neurogenesis. Required for expression of genes involved in neurogenesis, mitochondrial translation and energy generation, and lipid biosynthesis. Requisite for RNA-mediated gene silencing. May modify position 32 in tRNA(Arg(ACG)), tRNA(Arg(CCG)), tRNA(Arg(UCG)), tRNA(Cys(GCA)), tRNA(Cys(ACA)), tRNA(Gln(CUG)), tRNA(Gln(UUG)), tRNA(Gly(CCC)), tRNA(Leu(CAG))/tRNA(Leu(CAA)), tRNA(Leu(A/IAG)), tRNA(Leu(UAG)), tRNA(Phe(GAA)), tRNA(Pro(AGG))/tRNA(Pro(CGG))/tRNA(Pro(UGG)) and tRNA(Trp(CCA)), and position 34 in tRNA(Phe(GAA)), tRNA(Leu(CAA)), tRNA(Sec(UCA)), and tRNA(Trp(CCA)). This Homo sapiens (Human) protein is tRNA (cytidine(32)/guanosine(34)-2'-O)-methyltransferase.